The following is a 507-amino-acid chain: ATP synthase subunit alpha, chloroplastic (507 aa).

Position 170 to 177 (170 to 177) interacts with ATP; that stretch reads GDRQTGKT.

The protein belongs to the ATPase alpha/beta chains family. F-type ATPases have 2 components, CF(1) - the catalytic core - and CF(0) - the membrane proton channel. CF(1) has five subunits: alpha(3), beta(3), gamma(1), delta(1), epsilon(1). CF(0) has four main subunits: a, b, b' and c.

It localises to the plastid. The protein localises to the chloroplast thylakoid membrane. It carries out the reaction ATP + H2O + 4 H(+)(in) = ADP + phosphate + 5 H(+)(out). In terms of biological role, produces ATP from ADP in the presence of a proton gradient across the membrane. The alpha chain is a regulatory subunit. In Gossypium hirsutum (Upland cotton), this protein is ATP synthase subunit alpha, chloroplastic.